Reading from the N-terminus, the 484-residue chain is Protein nucleotidyltransferase YdiU (484 aa).

8 residues coordinate ATP: glycine 92, glycine 94, arginine 95, lysine 115, aspartate 127, glycine 128, arginine 178, and arginine 185. Aspartate 258 functions as the Proton acceptor in the catalytic mechanism. 2 residues coordinate Mg(2+): asparagine 259 and aspartate 268. Aspartate 268 is an ATP binding site.

Belongs to the SELO family. It depends on Mg(2+) as a cofactor. Requires Mn(2+) as cofactor.

The enzyme catalyses L-seryl-[protein] + ATP = 3-O-(5'-adenylyl)-L-seryl-[protein] + diphosphate. It carries out the reaction L-threonyl-[protein] + ATP = 3-O-(5'-adenylyl)-L-threonyl-[protein] + diphosphate. The catalysed reaction is L-tyrosyl-[protein] + ATP = O-(5'-adenylyl)-L-tyrosyl-[protein] + diphosphate. It catalyses the reaction L-histidyl-[protein] + UTP = N(tele)-(5'-uridylyl)-L-histidyl-[protein] + diphosphate. The enzyme catalyses L-seryl-[protein] + UTP = O-(5'-uridylyl)-L-seryl-[protein] + diphosphate. It carries out the reaction L-tyrosyl-[protein] + UTP = O-(5'-uridylyl)-L-tyrosyl-[protein] + diphosphate. In terms of biological role, nucleotidyltransferase involved in the post-translational modification of proteins. It can catalyze the addition of adenosine monophosphate (AMP) or uridine monophosphate (UMP) to a protein, resulting in modifications known as AMPylation and UMPylation. The polypeptide is Protein nucleotidyltransferase YdiU (Mycolicibacterium smegmatis (strain ATCC 700084 / mc(2)155) (Mycobacterium smegmatis)).